The primary structure comprises 79 residues: D-alanyl carrier protein (79 aa).

The 77-residue stretch at 1-77 (MDTKQGVLDI…KIVAKVESLE (77 aa)) folds into the Carrier domain. An O-(pantetheine 4'-phosphoryl)serine modification is found at Ser35.

It belongs to the DltC family. 4'-phosphopantetheine is transferred from CoA to a specific serine of apo-DCP.

It is found in the cytoplasm. Its pathway is cell wall biogenesis; lipoteichoic acid biosynthesis. In terms of biological role, carrier protein involved in the D-alanylation of lipoteichoic acid (LTA). The loading of thioester-linked D-alanine onto DltC is catalyzed by D-alanine--D-alanyl carrier protein ligase DltA. The DltC-carried D-alanyl group is further transferred to cell membrane phosphatidylglycerol (PG) by forming an ester bond, probably catalyzed by DltD. D-alanylation of LTA plays an important role in modulating the properties of the cell wall in Gram-positive bacteria, influencing the net charge of the cell wall. The protein is D-alanyl carrier protein of Lactobacillus acidophilus (strain ATCC 700396 / NCK56 / N2 / NCFM).